A 111-amino-acid chain; its full sequence is Large ribosomal subunit protein uL22 (111 aa).

It belongs to the universal ribosomal protein uL22 family. As to quaternary structure, part of the 50S ribosomal subunit.

Its function is as follows. This protein binds specifically to 23S rRNA; its binding is stimulated by other ribosomal proteins, e.g. L4, L17, and L20. It is important during the early stages of 50S assembly. It makes multiple contacts with different domains of the 23S rRNA in the assembled 50S subunit and ribosome. In terms of biological role, the globular domain of the protein is located near the polypeptide exit tunnel on the outside of the subunit, while an extended beta-hairpin is found that lines the wall of the exit tunnel in the center of the 70S ribosome. The protein is Large ribosomal subunit protein uL22 of Xylella fastidiosa (strain M23).